Reading from the N-terminus, the 424-residue chain is Probable ribonuclease FAU-1 (424 aa).

The protein belongs to the FAU-1 family.

Its function is as follows. Probable RNase involved in rRNA stability through maturation and/or degradation of precursor rRNAs. Binds to RNA in loop regions with AU-rich sequences. In Saccharolobus islandicus (strain Y.G.57.14 / Yellowstone #1) (Sulfolobus islandicus), this protein is Probable ribonuclease FAU-1.